We begin with the raw amino-acid sequence, 280 residues long: Urease accessory protein UreD (280 aa).

The protein belongs to the UreD family. UreD, UreF and UreG form a complex that acts as a GTP-hydrolysis-dependent molecular chaperone, activating the urease apoprotein by helping to assemble the nickel containing metallocenter of UreC. The UreE protein probably delivers the nickel.

The protein localises to the cytoplasm. Functionally, required for maturation of urease via the functional incorporation of the urease nickel metallocenter. This Pseudomonas aeruginosa (strain ATCC 15692 / DSM 22644 / CIP 104116 / JCM 14847 / LMG 12228 / 1C / PRS 101 / PAO1) protein is Urease accessory protein UreD.